The chain runs to 147 residues: Anti-sigma F factor (147 aa).

It belongs to the anti-sigma-factor family.

It catalyses the reaction L-seryl-[protein] + ATP = O-phospho-L-seryl-[protein] + ADP + H(+). The enzyme catalyses L-threonyl-[protein] + ATP = O-phospho-L-threonyl-[protein] + ADP + H(+). In terms of biological role, binds to sigma F and blocks its ability to form an RNA polymerase holoenzyme (E-sigma F). Phosphorylates SpoIIAA on a serine residue. This phosphorylation may enable SpoIIAA to act as an anti-anti-sigma factor that counteracts SpoIIAB and thus releases sigma F from inhibition. The polypeptide is Anti-sigma F factor (Heyndrickxia coagulans (Weizmannia coagulans)).